The chain runs to 1469 residues: snRNA-activating protein complex subunit 4 (1469 aa).

The disordered stretch occupies residues E16–D82. Low complexity predominate over residues G24–S36. A compositionally biased stretch (acidic residues) spans L37–P53. At S68 the chain carries Phosphoserine. An SNAPC5-binding region spans residues E84–G133. A Myb-like 1 domain is found at E250 to E288. Positions H289–A343 constitute an HTH myb-type 1 domain. Residues W317 to N341 constitute a DNA-binding region (H-T-H motif). The 52-residue stretch at L344–L395 folds into the Myb-like 2 domain. 2 consecutive HTH myb-type domains span residues D396–L451 and K452–Q503. 2 DNA-binding regions (H-T-H motif) span residues W424–L447 and W476–M499. Disordered stretches follow at residues K501–A558, Q577–E661, R685–S710, A834–S894, P932–L981, P1001–T1051, A1121–A1167, and I1184–K1266. A compositionally biased stretch (basic residues) spans Q503–V516. Over residues S519–S541 the composition is skewed to low complexity. The residue at position 599 (S599) is a Phosphoserine. The segment covering K602 to A618 has biased composition (polar residues). S626 bears the Phosphoserine mark. Residues P932–G944 show a composition bias toward pro residues. Low complexity predominate over residues P951–S968. The span at I1014–P1029 shows a compositional bias: polar residues. Positions E1039–T1051 are enriched in pro residues. A Phosphothreonine modification is found at T1157. The span at I1184–P1195 shows a compositional bias: basic and acidic residues. Position 1224 is a phosphoserine (S1224). The segment at A1281–P1393 is SNAPC2-binding. A phosphoserine mark is found at S1398, S1400, and S1440. The disordered stretch occupies residues A1430–D1449. The span at C1436–S1445 shows a compositional bias: polar residues.

Part of the SNAPc complex composed of 5 subunits: SNAPC1, SNAPC2, SNAPC3, SNAPC4 and SNAPC5. SNAPC4 interacts with SNAPC1, SNAPC2, SNAPC5, BRF2 and TBP.

It is found in the nucleus. Functionally, part of the SNAPc complex required for the transcription of both RNA polymerase II and III small-nuclear RNA genes. Binds to the proximal sequence element (PSE), a non-TATA-box basal promoter element common to these 2 types of genes. Recruits TBP and BRF2 to the U6 snRNA TATA box. This is snRNA-activating protein complex subunit 4 from Homo sapiens (Human).